The sequence spans 103 residues: MKNMGQMMKQMQKMQKQMMKAQEELKEKTVEATAGGGMVTVVASGDKRILDVRISEDVVDPDDVEMLQDLILAATNEALKKVDELVEQDMGKFTKGLNMPGMF.

Positions methionine 1 to lysine 20 are enriched in low complexity. Positions methionine 1 to threonine 29 are disordered.

The protein belongs to the YbaB/EbfC family. In terms of assembly, homodimer.

It is found in the cytoplasm. The protein localises to the nucleoid. Functionally, binds to DNA and alters its conformation. May be involved in regulation of gene expression, nucleoid organization and DNA protection. The sequence is that of Nucleoid-associated protein BH0035 from Halalkalibacterium halodurans (strain ATCC BAA-125 / DSM 18197 / FERM 7344 / JCM 9153 / C-125) (Bacillus halodurans).